The following is a 94-amino-acid chain: Protein RnfH (94 aa).

The protein belongs to the UPF0125 (RnfH) family.

The chain is Protein RnfH from Serratia proteamaculans (strain 568).